A 609-amino-acid polypeptide reads, in one-letter code: UvrABC system protein C (609 aa).

The GIY-YIG domain occupies 16–94 (SSPGVYRMYD…IKQYMPRYNV (79 aa)). The UVR domain occupies 203–238 (LQVMTELVSKMEASALALEYEQAASYRDQIAALRRV).

The protein belongs to the UvrC family. Interacts with UvrB in an incision complex.

It is found in the cytoplasm. The UvrABC repair system catalyzes the recognition and processing of DNA lesions. UvrC both incises the 5' and 3' sides of the lesion. The N-terminal half is responsible for the 3' incision and the C-terminal half is responsible for the 5' incision. This is UvrABC system protein C from Shewanella sediminis (strain HAW-EB3).